Reading from the N-terminus, the 291-residue chain is 4-hydroxy-tetrahydrodipicolinate synthase (291 aa).

Thr45 contributes to the pyruvate binding site. Tyr133 serves as the catalytic Proton donor/acceptor. Lys161 acts as the Schiff-base intermediate with substrate in catalysis. Ile203 contacts pyruvate.

It belongs to the DapA family. As to quaternary structure, homotetramer; dimer of dimers.

The protein localises to the cytoplasm. The catalysed reaction is L-aspartate 4-semialdehyde + pyruvate = (2S,4S)-4-hydroxy-2,3,4,5-tetrahydrodipicolinate + H2O + H(+). It functions in the pathway amino-acid biosynthesis; L-lysine biosynthesis via DAP pathway; (S)-tetrahydrodipicolinate from L-aspartate: step 3/4. In terms of biological role, catalyzes the condensation of (S)-aspartate-beta-semialdehyde [(S)-ASA] and pyruvate to 4-hydroxy-tetrahydrodipicolinate (HTPA). This Saccharophagus degradans (strain 2-40 / ATCC 43961 / DSM 17024) protein is 4-hydroxy-tetrahydrodipicolinate synthase.